Here is a 570-residue protein sequence, read N- to C-terminus: Developmental and secondary metabolism regulator veA (570 aa).

Disordered stretches follow at residues 1–24, 39–60, 266–491, and 504–541; these read MATR…ISRE, ERAR…VDPP, DMYA…LGSG, and KRSH…DYGR. Positions 25–231 constitute a Velvet domain; sequence GKKITYKLSV…AEQGCRVRIR (207 aa). The Nuclear localization signal signature appears at 39–44; it reads ERARAC. Over residues 278–287 the composition is skewed to polar residues; it reads STSISTTADT. Residues 315 to 335 are compositionally biased toward low complexity; that stretch reads SMPAASAAPAPAPVHSPATSA. Composition is skewed to polar residues over residues 336–354, 363–395, and 427–445; these read QTSS…SQYP, QSAT…TSSG, and NMQT…YPTL. Residues 454–493 are PEST; sequence PTPANHVTSLPPLKVLSGEYSHPSQPNAQSPHHDLGSGKR. Positions 505–526 are enriched in basic and acidic residues; it reads RSHEETFGSDERPLHNGMRPDM.

The protein belongs to the velvet family. VeA subfamily. Component of the heterotrimeric velvet complex composed of laeA, veA and velB; VeA acting as a bridging protein between laeA and velB.

The protein resides in the nucleus. It is found in the cytoplasm. Functionally, component of the velvet transcription factor complex that controls sexual/asexual developmental ratio in response to light, promoting sexual development in the darkness while stimulating asexual sporulation under illumination. The velvet complex hat acts as a global regulator for secondary metabolite gene expression. Controls the expression of hundreds of genes, including those comprising more than a dozen known secondary metabolite gene clusters. Controls the expression of the gliotoxin gene cluster. Controls the expression of the fumagillin, fumitremorgin G, fumigaclavine C and glionitrin gene clusters. The regulation of the fumagillin gene cluster and fumagillin production is performed through direct control of the expression of fumR. Negatively regulates conidiation. Required for normal protease activity. The sequence is that of Developmental and secondary metabolism regulator veA from Aspergillus fumigatus (strain ATCC MYA-4609 / CBS 101355 / FGSC A1100 / Af293) (Neosartorya fumigata).